The chain runs to 362 residues: RING-H2 finger protein ATL52 (362 aa).

Residues 58–78 (LIALIGILTSALILVSYYTLI) form a helical membrane-spanning segment. Residues 142–184 (CSVCLSEFEENESLRLLPKCNHAFHLPCIDTWLKSHSNCPLCR) form an RING-type; atypical zinc finger. Disordered stretches follow at residues 252–271 (DARS…DEDS) and 296–333 (EDEE…RSGG). Over residues 309 to 319 (QRREEGEDGDG) the composition is skewed to basic and acidic residues.

The protein belongs to the RING-type zinc finger family. ATL subfamily. In terms of tissue distribution, expressed in flowers.

It localises to the membrane. It carries out the reaction S-ubiquitinyl-[E2 ubiquitin-conjugating enzyme]-L-cysteine + [acceptor protein]-L-lysine = [E2 ubiquitin-conjugating enzyme]-L-cysteine + N(6)-ubiquitinyl-[acceptor protein]-L-lysine.. It participates in protein modification; protein ubiquitination. The chain is RING-H2 finger protein ATL52 (ATL52) from Arabidopsis thaliana (Mouse-ear cress).